A 187-amino-acid polypeptide reads, in one-letter code: Elongation factor P (187 aa).

It belongs to the elongation factor P family.

Its subcellular location is the cytoplasm. The protein operates within protein biosynthesis; polypeptide chain elongation. In terms of biological role, involved in peptide bond synthesis. Stimulates efficient translation and peptide-bond synthesis on native or reconstituted 70S ribosomes in vitro. Probably functions indirectly by altering the affinity of the ribosome for aminoacyl-tRNA, thus increasing their reactivity as acceptors for peptidyl transferase. In Desulfosudis oleivorans (strain DSM 6200 / JCM 39069 / Hxd3) (Desulfococcus oleovorans), this protein is Elongation factor P.